The primary structure comprises 144 residues: Glycophorin-A (144 aa).

Residues 1–25 show a composition bias toward polar residues; the sequence is SSTTVPATHTSSSSLGPEQYVSSQS. Positions 1–55 are disordered; that stretch reads SSTTVPATHTSSSSLGPEQYVSSQSNDKHTSDSHPTPTSAHEVTTEFSGRTHYPP. O-linked (GalNAc...) serine glycosylation is present at Ser-2. 4 O-linked (GalNAc...) threonine glycosylation sites follow: Thr-3, Thr-4, Thr-8, and Thr-10. Ser-11, Ser-12, Ser-13, Ser-14, Ser-22, and Ser-23 each carry an O-linked (GalNAc...) serine glycan. O-linked (GalNAc...) threonine glycosylation is found at Thr-30, Thr-36, Thr-38, Thr-44, and Thr-45. Positions 33–48 are enriched in polar residues; it reads SHPTPTSAHEVTTEFS. The O-linked (GalNAc...) serine glycan is linked to Ser-48. Residue Thr-51 is glycosylated (O-linked (GalNAc...) threonine). A helical membrane pass occupies residues 70–92; the sequence is LVIALIIFGVMAGVIGTILFISY. The interval 101–144 is disordered; sequence SESDVQPLPPPDAEVPLSSVEIEDPEETDELNSFTKPNQERNES. Ser-118 is subject to Phosphoserine. A compositionally biased stretch (acidic residues) spans 121 to 130; sequence EIEDPEETDE.

Belongs to the glycophorin-A family. Homodimer. Component of the ankyrin-1 complex in the erythrocyte, composed of ANK1, RHCE, RHAG, SLC4A1, EPB42, GYPA, GYPB and AQP1. Interacts with SLC4A1; a GYPA monomer is bound at each end of the SLC4A1 dimer forming a heterotetramer.

It localises to the membrane. Its function is as follows. Component of the ankyrin-1 complex, a multiprotein complex involved in the stability and shape of the erythrocyte membrane. Glycophorin A is the major intrinsic membrane protein of the erythrocyte. The N-terminal glycosylated segment, which lies outside the erythrocyte membrane, has MN blood group receptors. Appears to be important for the function of SLC4A1 and is required for high activity of SLC4A1. May be involved in translocation of SLC4A1 to the plasma membrane. This Macaca fuscata fuscata (Japanese macaque) protein is Glycophorin-A.